Consider the following 267-residue polypeptide: Alkaline ceramidase 3 (267 aa).

Residues 1-33 lie on the Cytoplasmic side of the membrane; the sequence is MAPAADREGYWGPTTSTLDWCEENYSVTWYIAE. 5 residues coordinate Ca(2+): aspartate 19, tryptophan 20, glutamate 22, asparagine 24, and glutamate 33. The chain crosses the membrane as a helical span at residues 34–55; that stretch reads FWNTVSNLIMIIPPMFGAVQSV. The Lumenal segment spans residues 56-61; that stretch reads RDGLEK. Residues 62 to 82 traverse the membrane as a helical segment; the sequence is RYIASYLALTVVGMGSWCFHM. Histidine 81 provides a ligand contact to Zn(2+). Residues 83–87 lie on the Cytoplasmic side of the membrane; the sequence is TLKYE. A helical transmembrane segment spans residues 88 to 108; sequence MQLLDELPMIYSCCIFVYCMF. The Lumenal segment spans residues 109–118; that stretch reads ECFKIKNSVN. A helical membrane pass occupies residues 119 to 139; sequence YHLLFTLVLFSLIVTTVYLKV. The Cytoplasmic portion of the chain corresponds to 140-141; that stretch reads KE. A helical transmembrane segment spans residues 142–162; it reads PIFHQVMYGMLVFTLVLRSIY. At 163–173 the chain is on the lumenal side; that stretch reads IVTWVYPWLRG. Residues 174–194 form a helical membrane-spanning segment; the sequence is LGYTSLGIFLLGFLFWNIDNI. The Cytoplasmic segment spans residues 195–215; sequence FCESLRNFRKKVPPIIGITTQ. The chain crosses the membrane as a helical span at residues 216 to 236; sequence FHAWWHILTGLGSYLHILFSL. The Zn(2+) site is built by histidine 217 and histidine 221. Over 237–267 the chain is Lumenal; that stretch reads YTRTLYLRYRPKVKFLFGIWPVILFEPLRKH.

Belongs to the alkaline ceramidase family. The cofactor is Zn(2+). In terms of tissue distribution, ubiquitously expressed. Highly expressed in placenta. Expressed in erythrocytes.

The protein localises to the endoplasmic reticulum membrane. Its subcellular location is the golgi apparatus membrane. It carries out the reaction an N-acyl-(4R)-4-hydroxysphinganine + H2O = (4R)-hydroxysphinganine + a fatty acid. The enzyme catalyses N-(5Z,8Z,11Z,14Z-eicosatetraenoyl)-sphing-4-enine + H2O = sphing-4-enine + (5Z,8Z,11Z,14Z)-eicosatetraenoate. It catalyses the reaction N-(5Z,8Z,11Z,14Z-eicosatetraenoyl)-sphinganine + H2O = sphinganine + (5Z,8Z,11Z,14Z)-eicosatetraenoate. The catalysed reaction is N-(5Z,8Z,11Z,14Z-eicosatetraenoyl)-(4R)-hydroxysphinganine + H2O = (4R)-hydroxysphinganine + (5Z,8Z,11Z,14Z)-eicosatetraenoate. It carries out the reaction N-(11Z-eicosenoyl)-sphing-4-enine + H2O = (11Z)-eicosenoate + sphing-4-enine. The enzyme catalyses N-(11Z-eicosenoyl)-sphinganine + H2O = (11Z)-eicosenoate + sphinganine. It catalyses the reaction N-(11Z-eicosenoyl)-(4R)-hydroxysphinganine + H2O = (11Z)-eicosenoate + (4R)-hydroxysphinganine. The catalysed reaction is N-(9Z-octadecenoyl)-sphing-4-enine + H2O = sphing-4-enine + (9Z)-octadecenoate. It carries out the reaction N-(9Z-octadecenoyl)-sphinganine + H2O = sphinganine + (9Z)-octadecenoate. The enzyme catalyses N-(9Z-octadecenoyl)-(4R)-hydroxysphinganine + H2O = (4R)-hydroxysphinganine + (9Z)-octadecenoate. It catalyses the reaction an N-acylsphing-4-enine + H2O = sphing-4-enine + a fatty acid. The catalysed reaction is an N-acylsphinganine + H2O = sphinganine + a fatty acid. Its pathway is lipid metabolism; sphingolipid metabolism. With respect to regulation, activated by 5 mM Ca(2+) and inhibited by 5 mM Zn(2+). Endoplasmic reticulum and Golgi ceramidase that catalyzes the hydrolysis of unsaturated long-chain C18:1-, C20:1- and C20:4-ceramides, dihydroceramides and phytoceramides into sphingoid bases like sphingosine and free fatty acids at alkaline pH. Ceramides, sphingosine, and its phosphorylated form sphingosine-1-phosphate are bioactive lipids that mediate cellular signaling pathways regulating several biological processes including cell proliferation, apoptosis and differentiation. Controls the generation of sphingosine in erythrocytes, and thereby sphingosine-1-phosphate in plasma. Through the regulation of ceramides and sphingosine-1-phosphate homeostasis in the brain may play a role in neurons survival and function. By regulating the levels of pro-inflammatory ceramides in immune cells and tissues, may modulate the inflammatory response. The chain is Alkaline ceramidase 3 (ACER3) from Homo sapiens (Human).